A 375-amino-acid polypeptide reads, in one-letter code: Dual specificity protein phosphatase 4 (375 aa).

The 119-residue stretch at 25-143 folds into the Rhodanese domain; sequence SGGRCLLLDC…FASEYPEFCA (119 aa). Residues 176–317 form the Tyrosine-protein phosphatase domain; sequence GPVEILPFLY…LLQFESQVLA (142 aa). The Phosphocysteine intermediate role is filled by C261.

It belongs to the protein-tyrosine phosphatase family. Non-receptor class dual specificity subfamily.

The protein localises to the nucleus. It carries out the reaction O-phospho-L-tyrosyl-[protein] + H2O = L-tyrosyl-[protein] + phosphate. It catalyses the reaction O-phospho-L-seryl-[protein] + H2O = L-seryl-[protein] + phosphate. The catalysed reaction is O-phospho-L-threonyl-[protein] + H2O = L-threonyl-[protein] + phosphate. Its function is as follows. Regulates mitogenic signal transduction by dephosphorylating both Thr and Tyr residues on MAP kinases ERK1 and ERK2. The polypeptide is Dual specificity protein phosphatase 4 (DUSP4) (Gallus gallus (Chicken)).